Reading from the N-terminus, the 138-residue chain is MAKPILRIGSRKNTRSGSRKNVRRIPKGVIHVQASFNNTIVTVTDVRGRVISWSSAGTCGFKGTRRGTPFAAQTAAGNAIRAVVDQGIQRAEVRIKGPGLGRDAALRAIRRSGILLSFVRDVTPMPHNGCRPPKKRRV.

The disordered stretch occupies residues Met-1–Arg-23. The segment covering Gly-9–Arg-23 has biased composition (basic residues).

This sequence belongs to the universal ribosomal protein uS11 family. In terms of assembly, part of the 30S ribosomal subunit.

It localises to the plastid. The protein resides in the chloroplast. The polypeptide is Small ribosomal subunit protein uS11c (Aethionema grandiflorum (Persian stone-cress)).